The sequence spans 451 residues: REST corepressor 3 (451 aa).

The segment at 1-55 (MPGMMEKGPELLGKSRSANGGAKSPAGGGGSSANGGLHFSEPESGCSSDDEHGDV) is disordered. The ELM2 domain occupies 55–139 (VGMRVGAEYQ…KSLADLPNFT (85 aa)). A Glycyl lysine isopeptide (Lys-Gly) (interchain with G-Cter in SUMO2) cross-link involves residue Lys-76. Positions 140-191 (PFPDEWTVEDKVLFEQAFSFHGKSFHRIQQMLPDKTIASLVKYYYSWKKTRS) constitute an SANT domain. Positions 204 to 275 (ANRHNQGDSD…SQRSKCRPPK (72 aa)) are disordered. Phosphoserine occurs at positions 212 and 227. Over residues 218-240 (EAHPMDGNDSDYDPKKEAKREGN) the composition is skewed to basic and acidic residues. A Glycyl lysine isopeptide (Lys-Gly) (interchain with G-Cter in SUMO2) cross-link involves residue Lys-249. The span at 261–273 (QHRHHSQRSKCRP) shows a compositional bias: basic residues. Residues 293-329 (AANTILRQLDMELISLKRQVQNAKQVNSALKQKMEGG) adopt a coiled-coil conformation. The tract at residues 333-451 (FKPPEAQTPQ…IQTDSQPSLH (119 aa)) is disordered. Residues 349–361 (PSPPAPSSTPTPT) show a composition bias toward pro residues. The segment covering 375-384 (RPTLPAAPAL) has biased composition (low complexity). Arg-401 and Arg-413 each carry asymmetric dimethylarginine. Polar residues predominate over residues 431–451 (VGGQQPPSLIGIQTDSQPSLH).

The protein belongs to the CoREST family.

The protein localises to the nucleus. In terms of biological role, may act as a component of a corepressor complex that represses transcription. This is REST corepressor 3 (Rcor3) from Mus musculus (Mouse).